A 673-amino-acid polypeptide reads, in one-letter code: MPRKRSRFELSIHSLLLSVAVLSGAAYASGYYPPSQQVPIIPPQVPLKGAEATPDIHEFSLRHIFHRGTYEQPDFHARLDVKPDTRLRTVSEDGHEEEYIASESSLLASSSPLTIQRLADRRLPVIQGHLAAARSSGFAAALSPQEWALDTLPGPNITDKPTVLTFAQMTANDYIEEPGTGQWHTINGKFNYSGSFGWQKDGLRGHIYSDKTNGTVVISLKGTSPALFDGAGTTTNDKVNDNLYFSCCCGQGGSYLWRQSCDCQSATFTANLTCIIESMTDEDRYYRAAIDLYSNVTEIYPDANIWMTGHSLGGAMTSLVGLTFGLPVVTFEAVPEALPAARLGLPSPPGYDPRFPQSRQYTGAYHFGHTADPVFMGTCNGINSICTWGGYAMESVCHTGQVCTYDTVADKGWRVGLGTHKIENVISDVLMTYDSVPSCVAEEECFDCELWKFFRSNGSEITTTTTTTTTTTSPTRTSTCKTPGWWGCLDESTTATTTTTTTTTSTATTTTCMTPGWFGCNDPTTTTATPAPTVTTTLPTVTSTTTSCHDPGWFGCRDETSTVATTTANPASPTSTACHSPGIFWGCWDEPTSTTAVTSLPAFTSAPISTTCHSPGIFWGCWDEPTSTTAVTSLPAITSTPISTTCHIPGIFWGCWDEPTNTPAVTSAPTPTS.

At 1 to 7 (MPRKRSR) the chain is on the cytoplasmic side. Residues 8-28 (FELSIHSLLLSVAVLSGAAYA) traverse the membrane as a helical; Signal-anchor for type II membrane protein segment. Over 29 to 673 (SGYYPPSQQV…AVTSAPTPTS (645 aa)) the chain is Lumenal. Asn-156, Asn-191, Asn-213, Asn-271, and Asn-295 each carry an N-linked (GlcNAc...) asparagine glycan. Catalysis depends on Ser-311, which acts as the Charge relay system. Asn-457 is a glycosylation site (N-linked (GlcNAc...) asparagine).

The protein belongs to the AB hydrolase superfamily. Lipase family. As to quaternary structure, binds to both phosphatidylinositol (PI) and phosphatidylinositol 3,5-bisphosphate (PIP2).

Its subcellular location is the endosome. The protein resides in the multivesicular body membrane. It is found in the prevacuolar compartment membrane. It catalyses the reaction a triacylglycerol + H2O = a diacylglycerol + a fatty acid + H(+). In terms of biological role, lipase which is essential for lysis of subvacuolar cytoplasm to vacuole targeted bodies and intravacuolar autophagic bodies. Involved in the lysis of intravacuolar multivesicular body (MVB) vesicles. The intravacuolar membrane disintegration by atg15 is critical to life span extension. In Penicillium rubens (strain ATCC 28089 / DSM 1075 / NRRL 1951 / Wisconsin 54-1255) (Penicillium chrysogenum), this protein is Putative lipase atg15 (atg15).